Reading from the N-terminus, the 94-residue chain is Integration host factor subunit beta (94 aa).

This sequence belongs to the bacterial histone-like protein family. As to quaternary structure, heterodimer of an alpha and a beta chain.

Its function is as follows. This protein is one of the two subunits of integration host factor, a specific DNA-binding protein that functions in genetic recombination as well as in transcriptional and translational control. The sequence is that of Integration host factor subunit beta from Haemophilus influenzae (strain 86-028NP).